Reading from the N-terminus, the 662-residue chain is DNA helicase/primase complex-associated protein (662 aa).

It belongs to the herpesviridae HEPA family. As to quaternary structure, associates with the primase and the helicase to form the helicase-primase complex. Interacts with the origin-binding protein. Interacts with the polymerase catalytic subunit.

Its subcellular location is the host nucleus. Functionally, component of the helicase/primase complex. Unwinds the DNA at the replication forks and generates single-stranded DNA for both leading and lagging strand synthesis. The primase synthesizes short RNA primers on the lagging strand that the polymerase presumably elongates using dNTPs. The primase-associated factor has no known catalytic activity in the complex and may serve to facilitate the formation of the replisome by directly interacting with the origin-binding protein and the polymerase. The protein is DNA helicase/primase complex-associated protein (U74) of Human herpesvirus 6B (strain Z29) (HHV-6 variant B).